Here is a 436-residue protein sequence, read N- to C-terminus: uncharacterized protein (436 aa).

12 helical membrane-spanning segments follow: residues 38 to 58 (ILIF…TVGA), 70 to 90 (VAGI…LLIG), 102 to 122 (LAGG…AALI), 125 to 145 (VALL…NLQV), 160 to 180 (TAAS…PNLV), 197 to 217 (GPFI…LIFL), 254 to 274 (IMVG…IMTM), 291 to 311 (LVIG…GLLV), 319 to 339 (MAIA…IAPA), 342 to 362 (LSLL…GLLT), 383 to 403 (FDVL…MVVA), and 409 to 429 (ILSI…IWYF).

The protein belongs to the major facilitator superfamily.

The protein localises to the cell membrane. This is an uncharacterized protein from Bacillus subtilis (strain 168).